The sequence spans 536 residues: Lysosomal acid glucosylceramidase (536 aa).

Positions 1–39 (MELSSPSREEYPMPRGRVGIMAASLMGLLLLHTVSWVSG) are cleaved as a signal peptide. Cystine bridges form between Cys43–Cys55 and Cys57–Cys62. Residues Asn58, Asn98, Asn185, and Asn208 are each glycosylated (N-linked (GlcNAc...) asparagine). The active-site Proton donor is the Glu274. An N-linked (GlcNAc...) asparagine glycan is attached at Asn309. Glu379 functions as the Nucleophile in the catalytic mechanism. Asn501 is a glycosylation site (N-linked (GlcNAc...) asparagine).

It belongs to the glycosyl hydrolase 30 family. As to quaternary structure, interacts with saposin-C. Interacts with SCARB2. Interacts with TCP1. Interacts with GRN; this interaction prevents aggregation of GBA1-SCARB2 complex via interaction with HSPA1A upon stress.

It is found in the lysosome membrane. The enzyme catalyses a beta-D-glucosyl-(1&lt;-&gt;1')-N-acylsphing-4-enine + H2O = an N-acylsphing-4-enine + D-glucose. It carries out the reaction a beta-D-galactosyl-(1&lt;-&gt;1')-N-acylsphing-4-enine + H2O = an N-acylsphing-4-enine + D-galactose. It catalyses the reaction cholesteryl 3-beta-D-glucoside + H2O = cholesterol + D-glucose. The catalysed reaction is a beta-D-glucosyl-(1&lt;-&gt;1')-N-acylsphing-4-enine + cholesterol = cholesteryl 3-beta-D-glucoside + an N-acylsphing-4-enine. The enzyme catalyses beta-D-glucosyl-N-(9Z-octadecenoyl)-sphing-4E-enine + cholesterol = N-(9Z-octadecenoyl)-sphing-4-enine + cholesteryl 3-beta-D-glucoside. It carries out the reaction beta-D-glucosyl-N-octanoylsphing-4E-enine + cholesterol = N-octanoylsphing-4-enine + cholesteryl 3-beta-D-glucoside. It catalyses the reaction beta-D-glucosyl-N-dodecanoylsphing-4-enine + cholesterol = N-dodecanoylsphing-4-enine + cholesteryl 3-beta-D-glucoside. The catalysed reaction is beta-D-glucosyl-(1&lt;-&gt;1)-N-octadecanoylsphing-4-enine + cholesterol = N-octadecanoylsphing-4-enine + cholesteryl 3-beta-D-glucoside. The enzyme catalyses beta-D-glucosyl-(1&lt;-&gt;1')-N-(15Z-tetracosenoyl)-sphing-4-enine + cholesterol = N-(15Z-tetracosenoyl)-sphing-4-enine + cholesteryl 3-beta-D-glucoside. It carries out the reaction a beta-D-galactosyl-(1&lt;-&gt;1')-N-acylsphing-4-enine + cholesterol = cholesteryl 3-beta-D-galactoside + an N-acylsphing-4-enine. It catalyses the reaction 1-(beta-D-galactosyl)-N-dodecanoylsphing-4-enine + cholesterol = cholesteryl 3-beta-D-galactoside + N-dodecanoylsphing-4-enine. The catalysed reaction is a beta-D-xylosyl-(1&lt;-&gt;1')-N-acylsphing-4-enine + cholesterol = cholesteryl 3-beta-D-xyloside + an N-acylsphing-4-enine. The enzyme catalyses beta-D-xylosyl-(1&lt;-&gt;1')-N-(9Z-octadecenoyl)-sphing-4-enine + cholesterol = cholesteryl 3-beta-D-xyloside + N-(9Z-octadecenoyl)-sphing-4-enine. The protein operates within steroid metabolism; cholesterol metabolism. Its pathway is sphingolipid metabolism. Its function is as follows. Glucosylceramidase that catalyzes, within the lysosomal compartment, the hydrolysis of glucosylceramides/GlcCers (such as beta-D-glucosyl-(1&lt;-&gt;1')-N-acylsphing-4-enine) into free ceramides (such as N-acylsphing-4-enine) and glucose. Plays a central role in the degradation of complex lipids and the turnover of cellular membranes. Through the production of ceramides, participates in the PKC-activated salvage pathway of ceramide formation. Catalyzes the glucosylation of cholesterol, through a transglucosylation reaction where glucose is transferred from GlcCer to cholesterol. GlcCer containing mono-unsaturated fatty acids (such as beta-D-glucosyl-N-(9Z-octadecenoyl)-sphing-4-enine) are preferred as glucose donors for cholesterol glucosylation when compared with GlcCer containing same chain length of saturated fatty acids (such as beta-D-glucosyl-N-octadecanoyl-sphing-4-enine). Under specific conditions, may alternatively catalyze the reverse reaction, transferring glucose from cholesteryl 3-beta-D-glucoside to ceramide. Can also hydrolyze cholesteryl 3-beta-D-glucoside producing glucose and cholesterol. Catalyzes the hydrolysis of galactosylceramides/GalCers (such as beta-D-galactosyl-(1&lt;-&gt;1')-N-acylsphing-4-enine), as well as the transfer of galactose between GalCers and cholesterol in vitro, but with lower activity than with GlcCers. Contrary to GlcCer and GalCer, xylosylceramide/XylCer (such as beta-D-xyosyl-(1&lt;-&gt;1')-N-acylsphing-4-enine) is not a good substrate for hydrolysis, however it is a good xylose donor for transxylosylation activity to form cholesteryl 3-beta-D-xyloside. This Bos taurus (Bovine) protein is Lysosomal acid glucosylceramidase (GBA1).